The following is a 296-amino-acid chain: Ribonuclease HIII (296 aa).

The RNase H type-2 domain maps to 80–296 (LALIGSDEVG…NTKKAYQRLK (217 aa)). 3 residues coordinate a divalent metal cation: Asp86, Glu87, and Asp191.

This sequence belongs to the RNase HII family. RnhC subfamily. Mn(2+) is required as a cofactor. Requires Mg(2+) as cofactor.

It localises to the cytoplasm. The enzyme catalyses Endonucleolytic cleavage to 5'-phosphomonoester.. In terms of biological role, endonuclease that specifically degrades the RNA of RNA-DNA hybrids. The sequence is that of Ribonuclease HIII from Streptococcus thermophilus (strain CNRZ 1066).